We begin with the raw amino-acid sequence, 209 residues long: COP9 signalosome complex subunit 8 (209 aa).

The PCI domain occupies 8-179 (DNAFSFRKLL…GTLDVSLNRF (172 aa)). A Phosphoserine modification is found at Ser175.

Belongs to the CSN8 family. In terms of assembly, component of the CSN complex, composed of COPS1/GPS1, COPS2, COPS3, COPS4, COPS5, COPS6, COPS7 (COPS7A or COPS7B), COPS8 and COPS9. In the complex, it probably interacts directly with COPS3, COPS4 and COPS7 (COPS7A or COPS7B). As to expression, widely expressed.

It is found in the cytoplasm. Its subcellular location is the nucleus. Functionally, component of the COP9 signalosome complex (CSN), a complex involved in various cellular and developmental processes. The CSN complex is an essential regulator of the ubiquitin (Ubl) conjugation pathway by mediating the deneddylation of the cullin subunits of SCF-type E3 ligase complexes, leading to decrease the Ubl ligase activity of SCF-type complexes such as SCF, CSA or DDB2. The complex is also involved in phosphorylation of p53/TP53, c-jun/JUN, IkappaBalpha/NFKBIA, ITPK1 and IRF8/ICSBP, possibly via its association with CK2 and PKD kinases. CSN-dependent phosphorylation of TP53 and JUN promotes and protects degradation by the Ubl system, respectively. This chain is COP9 signalosome complex subunit 8 (Cops8), found in Mus musculus (Mouse).